A 409-amino-acid chain; its full sequence is NADH-ubiquinone oxidoreductase chain 4 (409 aa).

Transmembrane regions (helical) follow at residues 10–30 (LWLF…FLIF), 44–64 (SYSF…IVIS), 76–96 (ILVF…LYMF), 98–118 (ELSM…IEKI), 120–140 (SSYY…FVYF), 160–180 (FFIL…HLWL), 194–214 (LLAG…LGSL), 221–241 (VWIL…VFQS), 245–265 (ALAA…LVFI), 271–291 (ISSV…FYLI), 305–325 (FMSS…VVFL), 353–373 (MFVM…FLIT), and 389–409 (VGFS…SVFY).

It belongs to the complex I subunit 4 family.

The protein resides in the mitochondrion membrane. It catalyses the reaction a ubiquinone + NADH + 5 H(+)(in) = a ubiquinol + NAD(+) + 4 H(+)(out). Functionally, core subunit of the mitochondrial membrane respiratory chain NADH dehydrogenase (Complex I) that is believed to belong to the minimal assembly required for catalysis. Complex I functions in the transfer of electrons from NADH to the respiratory chain. The immediate electron acceptor for the enzyme is believed to be ubiquinone. The polypeptide is NADH-ubiquinone oxidoreductase chain 4 (Caenorhabditis elegans).